Consider the following 292-residue polypeptide: ATP phosphoribosyltransferase (292 aa).

It belongs to the ATP phosphoribosyltransferase family. Long subfamily. Requires Mg(2+) as cofactor.

The protein resides in the cytoplasm. It catalyses the reaction 1-(5-phospho-beta-D-ribosyl)-ATP + diphosphate = 5-phospho-alpha-D-ribose 1-diphosphate + ATP. It functions in the pathway amino-acid biosynthesis; L-histidine biosynthesis; L-histidine from 5-phospho-alpha-D-ribose 1-diphosphate: step 1/9. Its activity is regulated as follows. Feedback inhibited by histidine. Functionally, catalyzes the condensation of ATP and 5-phosphoribose 1-diphosphate to form N'-(5'-phosphoribosyl)-ATP (PR-ATP). Has a crucial role in the pathway because the rate of histidine biosynthesis seems to be controlled primarily by regulation of HisG enzymatic activity. In Desulfatibacillum aliphaticivorans, this protein is ATP phosphoribosyltransferase.